A 449-amino-acid chain; its full sequence is Glucose-6-phosphate isomerase (449 aa).

Glu-291 (proton donor) is an active-site residue. Active-site residues include His-312 and Lys-426.

Belongs to the GPI family.

The protein localises to the cytoplasm. It catalyses the reaction alpha-D-glucose 6-phosphate = beta-D-fructose 6-phosphate. The protein operates within carbohydrate biosynthesis; gluconeogenesis. It participates in carbohydrate degradation; glycolysis; D-glyceraldehyde 3-phosphate and glycerone phosphate from D-glucose: step 2/4. In terms of biological role, catalyzes the reversible isomerization of glucose-6-phosphate to fructose-6-phosphate. In Streptococcus pyogenes serotype M18 (strain MGAS8232), this protein is Glucose-6-phosphate isomerase.